Here is a 120-residue protein sequence, read N- to C-terminus: Glycine cleavage system H protein (120 aa).

One can recognise a Lipoyl-binding domain in the interval 17–99 (IATVGITSHA…QGAGWLYRMR (83 aa)). K58 carries the N6-lipoyllysine modification.

Belongs to the GcvH family. The glycine cleavage system is composed of four proteins: P, T, L and H. (R)-lipoate serves as cofactor.

Its function is as follows. The glycine cleavage system catalyzes the degradation of glycine. The H protein shuttles the methylamine group of glycine from the P protein to the T protein. In Methylobacterium nodulans (strain LMG 21967 / CNCM I-2342 / ORS 2060), this protein is Glycine cleavage system H protein.